We begin with the raw amino-acid sequence, 577 residues long: Nuclear fusion protein tht1 (577 aa).

Positions 1–29 (MKFHPTRPFGLYFEFFIIISFFFTSESTG) are cleaved as a signal peptide. Residues 30–404 (DVESFMKYSN…MNVYFKGLSN (375 aa)) are Lumenal-facing. Residues Asn-163 and Asn-372 are each glycosylated (N-linked (GlcNAc...) asparagine). The helical transmembrane segment at 405-425 (IISSFAFIGFTLFATLSSLFF) threads the bilayer. Topologically, residues 426–433 (KVLKIHRR) are cytoplasmic. Residues 434 to 454 (PIIVFGSLSIIFIHIYCFKIT) form a helical membrane-spanning segment. The Lumenal portion of the chain corresponds to 455-470 (SWVNLYGWITCTIART). Residues 471–491 (LSFIKLNIRTFYLTAFLCALL) traverse the membrane as a helical segment. Topologically, residues 492-577 (NFLRYLKYRN…ESLEQSPWWD (86 aa)) are cytoplasmic.

The protein belongs to the KAR5 family. N-glycosylated.

The protein resides in the endoplasmic reticulum membrane. It localises to the nucleus membrane. Its function is as follows. Required for nuclear membrane fusion during karyogamy. The sequence is that of Nuclear fusion protein tht1 (tht1) from Schizosaccharomyces pombe (strain 972 / ATCC 24843) (Fission yeast).